A 438-amino-acid chain; its full sequence is Keratin, type I cytoskeletal 18 (438 aa).

Positions 4 to 83 are head; it reads AVSSRSTVVS…TLSGNAVISN (80 aa). Residues 84-119 are coil 1A; sequence EKETMQDLNDRLSNYLETVRRLENANQQLEIQIREA. The region spanning 84–395 is the IF rod domain; the sequence is EKETMQDLND…HLLGGEDSDT (312 aa). Positions 120–136 are linker 1; sequence MEKRGPSVRDYSNYEKI. Positions 137-228 are coil 1B; it reads IKELRDQIYD…KNHEDEVIAL (92 aa). The linker 12 stretch occupies residues 229–252; sequence RNQVNSCGVQVDLDAPKGTDLAEI. Residues 253-393 form a coil 2 region; the sequence is MATLRAEYEA…YRHLLGGEDS (141 aa). Residues 394–438 are tail; that stretch reads DTLSLQDALSAMKVSNVQTVQKIVVTTQKLVDGKVVEDSTVTETK.

The protein belongs to the intermediate filament family. As to quaternary structure, heterotetramer of two type I and two type II keratins. Keratin-18 associates with keratin-8. Phosphorylated. Post-translationally, proteolytically cleaved by caspases during epithelial cell apoptosis. As to expression, expressed at low levels in skin.

Functionally, when phosphorylated, plays a role in filament reorganization. The sequence is that of Keratin, type I cytoskeletal 18 from Protopterus aethiopicus (Marbled lungfish).